Consider the following 90-residue polypeptide: Phosphocarrier protein HPr (90 aa).

One can recognise an HPr domain in the interval Met-1 to Gly-89. His-15 (pros-phosphohistidine intermediate) is an active-site residue.

Belongs to the HPr family.

The protein resides in the cytoplasm. Functionally, general (non sugar-specific) component of the phosphoenolpyruvate-dependent sugar phosphotransferase system (sugar PTS). This major carbohydrate active-transport system catalyzes the phosphorylation of incoming sugar substrates concomitantly with their translocation across the cell membrane. The phosphoryl group from phosphoenolpyruvate (PEP) is transferred to the phosphoryl carrier protein HPr by enzyme I. Phospho-HPr then transfers it to the PTS EIIA domain. This is Phosphocarrier protein HPr (ptsH) from Pseudomonas aeruginosa (strain ATCC 15692 / DSM 22644 / CIP 104116 / JCM 14847 / LMG 12228 / 1C / PRS 101 / PAO1).